A 229-amino-acid polypeptide reads, in one-letter code: Secretory carrier-associated membrane protein 4 (229 aa).

At 1–39 the chain is on the cytoplasmic side; the sequence is MSEKENNFPPLPKFIPVKPCFYQNFSDEIPVEHQVLVKR. Helical transmembrane passes span 40–60, 61–81, 105–125, and 149–169; these read IYRL…ACLA, WWIG…LLLF, FMAF…QAIG, and VVML…AIAI. Topologically, residues 170–229 are cytoplasmic; the sequence is MKVHRIYRGAGGSFQKAQTEWNTGTWRNPPSREAQYNNFSGNSLPEYPTVPSYPGSGQWP. Position 194 is a phosphothreonine (Thr194). A disordered region spans residues 208 to 229; sequence FSGNSLPEYPTVPSYPGSGQWP.

Belongs to the SCAMP family.

It is found in the membrane. Functionally, probably involved in membrane protein trafficking. This chain is Secretory carrier-associated membrane protein 4 (SCAMP4), found in Homo sapiens (Human).